A 96-amino-acid polypeptide reads, in one-letter code: Small ribosomal subunit protein bS20 (96 aa).

A disordered region spans residues 1-27 (MAKQEVAAKKVKRPTALKRDLQNKKKR).

The protein belongs to the bacterial ribosomal protein bS20 family.

In terms of biological role, binds directly to 16S ribosomal RNA. The protein is Small ribosomal subunit protein bS20 of Protochlamydia amoebophila (strain UWE25).